A 257-amino-acid chain; its full sequence is Zinc import ATP-binding protein ZnuC (257 aa).

One can recognise an ABC transporter domain in the interval 5 to 220 (VELQSVTVTF…PSYVALFGQQ (216 aa)). 37 to 44 (GPNGAGKS) is a binding site for ATP. A disordered region spans residues 234-257 (HEHDLAGSPVGPCQHNKQHGHDNA).

This sequence belongs to the ABC transporter superfamily. Zinc importer (TC 3.A.1.15.5) family. As to quaternary structure, the complex is composed of two ATP-binding proteins (ZnuC), two transmembrane proteins (ZnuB) and a solute-binding protein (ZnuA).

The protein resides in the cell inner membrane. It catalyses the reaction Zn(2+)(out) + ATP(in) + H2O(in) = Zn(2+)(in) + ADP(in) + phosphate(in) + H(+)(in). In terms of biological role, part of the ABC transporter complex ZnuABC involved in zinc import. Responsible for energy coupling to the transport system. The protein is Zinc import ATP-binding protein ZnuC of Photobacterium profundum (strain SS9).